The following is a 93-amino-acid chain: Protein F-93 (93 aa).

Homodimer.

Its function is as follows. Probable transcription factor that recognizes a (pseudo-)palindromic DNA target sequence. This Saccharolobus solfataricus (Sulfolobus solfataricus) protein is Protein F-93.